A 331-amino-acid chain; its full sequence is Outer membrane lipoprotein PM1514 (331 aa).

The signal sequence occupies residues 1–20 (MQYFDIKKSLPVFCSLLITA). The N-palmitoyl cysteine moiety is linked to residue Cys21. Cys21 is lipidated: S-diacylglycerol cysteine.

The protein resides in the cell outer membrane. It is found in the cell surface. In Pasteurella multocida (strain Pm70), this protein is Outer membrane lipoprotein PM1514.